Reading from the N-terminus, the 534-residue chain is C-type lectin domain family 18 member A (534 aa).

The disordered stretch occupies residues 47–88 (GALPVAGKPEPMARSLASAPVSPWHHMDRGSTTPAKARSHSA). The SCP domain maps to 139–270 (LTAHNRLRSR…EAMEAFVCAY (132 aa)). Positions 316-349 (PRNPCRMSCRNLGHLNISTCRCHCQPGYTGRYCQ) constitute an EGF-like domain. 4 disulfide bridges follow: cysteine 324-cysteine 337, cysteine 339-cysteine 348, cysteine 415-cysteine 520, and cysteine 496-cysteine 512. Residues 394–521 (IDGDCFMVSP…CKTRNRYICQ (128 aa)) form the C-type lectin domain.

The protein resides in the secreted. The polypeptide is C-type lectin domain family 18 member A (Clec18a) (Mus musculus (Mouse)).